The primary structure comprises 362 residues: Trans-enoyl reductase phm4 (362 aa).

An NADP(+)-binding site is contributed by 50–53; the sequence is VDAK. 136–143 contacts substrate; that stretch reads TCFMTCGL. NADP(+)-binding positions include 171-174, 194-197, Tyr-212, and 259-260; these read ATAT, SPHS, and LD. Residue 280–284 participates in substrate binding; that stretch reads GPIML. 349–350 is a binding site for NADP(+); the sequence is VN.

It belongs to the zinc-containing alcohol dehydrogenase family. As to quaternary structure, monomer.

It functions in the pathway secondary metabolite biosynthesis. Trans-enoyl reductase; part of the gene cluster that mediates the biosynthesis of the trans-fused decalin-containing tetramic acid phomasetin, the stereochemical opposite of the HIV-1 integrase inhibitor equisetin. The PKS module of phm1 together with the enoylreductase phm4 catalyze the formation of the polyketide unit which is then conjugated to L-serine by the condensation domain of the phm1 NRPS module. Activity of the Dieckmann cyclase domain (RED) of phm1 results in release of the Dieckmann product intermediate. The Diels-Alderase phm7 then uses the Dieckmann product of phm1 as substrate and catalyzes the Diels-Alder cycloaddition to form the decalin ring of N-desmethylphomasetin. N-desmethylphomasetin is further methylated to phomasetin by the methyltransferase phm5. The sequence is that of Trans-enoyl reductase phm4 from Pyrenochaetopsis sp.